The sequence spans 233 residues: Large ribosomal subunit protein uL1 (233 aa).

Belongs to the universal ribosomal protein uL1 family. In terms of assembly, part of the 50S ribosomal subunit.

In terms of biological role, binds directly to 23S rRNA. The L1 stalk is quite mobile in the ribosome, and is involved in E site tRNA release. Its function is as follows. Protein L1 is also a translational repressor protein, it controls the translation of the L11 operon by binding to its mRNA. The polypeptide is Large ribosomal subunit protein uL1 (Photobacterium profundum (strain SS9)).